Here is a 61-residue protein sequence, read N- to C-terminus: Large ribosomal subunit protein bL32 (61 aa).

This sequence belongs to the bacterial ribosomal protein bL32 family.

The protein is Large ribosomal subunit protein bL32 of Ehrlichia canis (strain Jake).